Reading from the N-terminus, the 259-residue chain is Deoxyribose-phosphate aldolase (259 aa).

Asp-104 functions as the Proton donor/acceptor in the catalytic mechanism. Catalysis depends on Lys-168, which acts as the Schiff-base intermediate with acetaldehyde. The Proton donor/acceptor role is filled by Lys-200.

The protein belongs to the DeoC/FbaB aldolase family. DeoC type 2 subfamily.

The protein resides in the cytoplasm. The catalysed reaction is 2-deoxy-D-ribose 5-phosphate = D-glyceraldehyde 3-phosphate + acetaldehyde. It functions in the pathway carbohydrate degradation; 2-deoxy-D-ribose 1-phosphate degradation; D-glyceraldehyde 3-phosphate and acetaldehyde from 2-deoxy-alpha-D-ribose 1-phosphate: step 2/2. Its function is as follows. Catalyzes a reversible aldol reaction between acetaldehyde and D-glyceraldehyde 3-phosphate to generate 2-deoxy-D-ribose 5-phosphate. The chain is Deoxyribose-phosphate aldolase from Agrobacterium fabrum (strain C58 / ATCC 33970) (Agrobacterium tumefaciens (strain C58)).